A 160-amino-acid polypeptide reads, in one-letter code: SUMO-conjugating enzyme SCE1 (160 aa).

A2 carries the post-translational modification N-acetylalanine. The region spanning 5-158 (IARGRLAEER…VKLQSKQYPA (154 aa)) is the UBC core domain. The active-site Glycyl thioester intermediate is C94.

Belongs to the ubiquitin-conjugating enzyme family. As to quaternary structure, interacts with SIZ1 (via PHD domain) and MMS21. Interacts with TCP14 and TCP15. Interacts with KIN10.

The protein operates within protein modification; protein sumoylation. Functionally, SUMO-conjugating enzyme that accepts the SUMO proteins from the E1 SUMO-activating heterodimer SAE1/SAE2 and catalyzes its covalent attachment to other proteins with the E3 SUMO ligases SIZ1 and MMS21. Associates with SIZ1 for sumoylation of the transcription factor GTE3. In Arabidopsis thaliana (Mouse-ear cress), this protein is SUMO-conjugating enzyme SCE1 (SCE1).